The chain runs to 200 residues: dITP/XTP pyrophosphatase (200 aa).

Residue 8–13 (TGNQGK) coordinates substrate. The Proton acceptor role is filled by Asp69. Asp69 lines the Mg(2+) pocket. Substrate contacts are provided by residues Ser70, 154–157 (FGYD), Lys177, and 182–183 (HR).

It belongs to the HAM1 NTPase family. In terms of assembly, homodimer. The cofactor is Mg(2+).

The enzyme catalyses XTP + H2O = XMP + diphosphate + H(+). It carries out the reaction dITP + H2O = dIMP + diphosphate + H(+). It catalyses the reaction ITP + H2O = IMP + diphosphate + H(+). Its function is as follows. Pyrophosphatase that catalyzes the hydrolysis of nucleoside triphosphates to their monophosphate derivatives, with a high preference for the non-canonical purine nucleotides XTP (xanthosine triphosphate), dITP (deoxyinosine triphosphate) and ITP. Seems to function as a house-cleaning enzyme that removes non-canonical purine nucleotides from the nucleotide pool, thus preventing their incorporation into DNA/RNA and avoiding chromosomal lesions. The chain is dITP/XTP pyrophosphatase from Vibrio parahaemolyticus serotype O3:K6 (strain RIMD 2210633).